The following is a 249-amino-acid chain: tRNA (guanine-N(1)-)-methyltransferase (249 aa).

Residues glycine 113 and 133–138 (IGDFVL) each bind S-adenosyl-L-methionine.

This sequence belongs to the RNA methyltransferase TrmD family. As to quaternary structure, homodimer.

It is found in the cytoplasm. It catalyses the reaction guanosine(37) in tRNA + S-adenosyl-L-methionine = N(1)-methylguanosine(37) in tRNA + S-adenosyl-L-homocysteine + H(+). Functionally, specifically methylates guanosine-37 in various tRNAs. The protein is tRNA (guanine-N(1)-)-methyltransferase of Aliivibrio fischeri (strain ATCC 700601 / ES114) (Vibrio fischeri).